The sequence spans 276 residues: Bis(5'-nucleosyl)-tetraphosphatase, symmetrical (276 aa).

Belongs to the Ap4A hydrolase family.

It catalyses the reaction P(1),P(4)-bis(5'-adenosyl) tetraphosphate + H2O = 2 ADP + 2 H(+). Its function is as follows. Hydrolyzes diadenosine 5',5'''-P1,P4-tetraphosphate to yield ADP. The chain is Bis(5'-nucleosyl)-tetraphosphatase, symmetrical from Legionella pneumophila (strain Corby).